Reading from the N-terminus, the 211-residue chain is Urease accessory protein UreG (211 aa).

11–18 is a GTP binding site; it reads GPVGAGKT.

This sequence belongs to the SIMIBI class G3E GTPase family. UreG subfamily. In terms of assembly, homodimer. UreD, UreF and UreG form a complex that acts as a GTP-hydrolysis-dependent molecular chaperone, activating the urease apoprotein by helping to assemble the nickel containing metallocenter of UreC. The UreE protein probably delivers the nickel.

Its subcellular location is the cytoplasm. Functionally, facilitates the functional incorporation of the urease nickel metallocenter. This process requires GTP hydrolysis, probably effectuated by UreG. This chain is Urease accessory protein UreG, found in Actinobacillus pleuropneumoniae serotype 3 (strain JL03).